A 598-amino-acid chain; its full sequence is Movement protein Hsp70h (598 aa).

It belongs to the heat shock protein 70 family. As to quaternary structure, homomultimer. Interacts with p20. This interaction allows the docking of the latter to the virion.

The protein localises to the virion. The protein resides in the host cell junction. It localises to the host plasmodesma. Functionally, transports viral genome to neighboring plant cells directly through plasmosdesmata, without any budding. The movement protein allows efficient cell to cell propagation, by bypassing the host cell wall barrier. Two movement proteins, p6, Hsp70h and three structural proteins, CP, CPm, and P64 are essential for cell-cell movement. Also plays a role in virion formation. Together with CPm and p64, encapsidates the 5'-terminal portion of the viral genome. This is Movement protein Hsp70h from Beta vulgaris (Sugar beet).